Here is a 363-residue protein sequence, read N- to C-terminus: MDKRANSRKPFLFYNEDYYCEKPKRYFHTNKVIFEKLDSYATNINRCRELLTDFFDYCLPKYYRRKNKFTLLFRLLEPVIKQAGASALTTVSNDQCRWLEINQFSGWEQRDNQYAHKWLIKVVGADMGQQILFIIKQVTKKFKTCNLGFHNYYKLFRRCLSILLFKHKEVFVQCLQVILKAAMPVKKKGVVKSNYAFAVTNALHYYIVDNPHLLCKDINVAIKVRRLLIKHEMLPTEKQIKLSFEKCSKGIEVPLYEKLLLNHMMRINDDNLQWPSLINNKKIMEWNANRCFDESNKILHVYIGQYYTSSCRRVKKSFFKYNGWNRQGRFCRTEKFCHLVNLQLNKDGSKKLKRVQRKLINCK.

The polypeptide is 43 kDa protein (P43) (Lepidoptera (butterflies and moths)).